The chain runs to 409 residues: MKQNYTKLKPNFENIFFEQENDKMILNFGPQHPSAHGQLRLILELENEKIIKATPDIGYLHRGIEKMAENMIYNEFMPTTDRLDYIAATSNNYAFALGVEKLIGVDIPLRAQVIRTMLLEINRIISHIFLLGVQGMDVGALSIFLYCFIEREYGLDLMEDYCGARLTHNAIRIGGVPLDLPHNFLESVEKFTHSVPKTLDLVRGLLDKNRIWRIRLENVGYISQDFAKQWSLSGIMARGSGIKWDIRKHNPYELYSELDFEVPIATEGDCYARYQLYIEEIYESLKIIKQLIAMYPSTPKEIMAKDARYISAPKEDIMTQNYSLMQHFVLVTQGMRPPVGEVYVPTESPKGELGFFINSQGAPSPHRLKIRTPSFYHIGVLQELLIGHYFADIPAILASTNVVFGEIDR.

Belongs to the complex I 49 kDa subunit family. NDH-1 is composed of 14 different subunits. Subunits NuoB, C, D, E, F, and G constitute the peripheral sector of the complex.

Its subcellular location is the cell inner membrane. The enzyme catalyses a quinone + NADH + 5 H(+)(in) = a quinol + NAD(+) + 4 H(+)(out). In terms of biological role, NDH-1 shuttles electrons from NADH, via FMN and iron-sulfur (Fe-S) centers, to quinones in the respiratory chain. The immediate electron acceptor for the enzyme in this species is believed to be ubiquinone. Couples the redox reaction to proton translocation (for every two electrons transferred, four hydrogen ions are translocated across the cytoplasmic membrane), and thus conserves the redox energy in a proton gradient. In Helicobacter hepaticus (strain ATCC 51449 / 3B1), this protein is NADH-quinone oxidoreductase subunit D.